The sequence spans 103 residues: Urease subunit gamma (103 aa).

Belongs to the urease gamma subunit family. In terms of assembly, heterotrimer of UreA (gamma), UreB (beta) and UreC (alpha) subunits. Three heterotrimers associate to form the active enzyme.

The protein localises to the cytoplasm. It carries out the reaction urea + 2 H2O + H(+) = hydrogencarbonate + 2 NH4(+). It functions in the pathway nitrogen metabolism; urea degradation; CO(2) and NH(3) from urea (urease route): step 1/1. The polypeptide is Urease subunit gamma (Paracoccus denitrificans (strain Pd 1222)).